A 210-amino-acid chain; its full sequence is NADH dehydrogenase [ubiquinone] iron-sulfur protein 8, mitochondrial (210 aa).

A mitochondrion-targeting transit peptide spans 1-34 (MRCLTTPVLLRALAQAARAGPPGGRSLHSSAVAA). 4Fe-4S ferredoxin-type domains follow at residues 102–131 (RRYP…IEAE) and 141–170 (TRYD…EGPN). C111, C114, C117, C121, C150, C153, C156, and C160 together coordinate [4Fe-4S] cluster.

This sequence belongs to the complex I 23 kDa subunit family. Core subunit of respiratory chain NADH dehydrogenase (Complex I) which is composed of 45 different subunits. This is a component of the iron-sulfur (IP) fragment of the enzyme. Interacts with RAB5IF. [4Fe-4S] cluster serves as cofactor.

It is found in the mitochondrion inner membrane. The catalysed reaction is a ubiquinone + NADH + 5 H(+)(in) = a ubiquinol + NAD(+) + 4 H(+)(out). Core subunit of the mitochondrial membrane respiratory chain NADH dehydrogenase (Complex I) which catalyzes electron transfer from NADH through the respiratory chain, using ubiquinone as an electron acceptor. Essential for the catalytic activity and assembly of complex I. The polypeptide is NADH dehydrogenase [ubiquinone] iron-sulfur protein 8, mitochondrial (NDUFS8) (Gorilla gorilla gorilla (Western lowland gorilla)).